The chain runs to 346 residues: S-adenosylmethionine:tRNA ribosyltransferase-isomerase (346 aa).

It belongs to the QueA family. Monomer.

The protein resides in the cytoplasm. The catalysed reaction is 7-aminomethyl-7-carbaguanosine(34) in tRNA + S-adenosyl-L-methionine = epoxyqueuosine(34) in tRNA + adenine + L-methionine + 2 H(+). Its pathway is tRNA modification; tRNA-queuosine biosynthesis. Functionally, transfers and isomerizes the ribose moiety from AdoMet to the 7-aminomethyl group of 7-deazaguanine (preQ1-tRNA) to give epoxyqueuosine (oQ-tRNA). The polypeptide is S-adenosylmethionine:tRNA ribosyltransferase-isomerase (Chloroherpeton thalassium (strain ATCC 35110 / GB-78)).